We begin with the raw amino-acid sequence, 122 residues long: MIQQESRLKVADNTGAKEILCIRVLGGSSRRYASIGDVIVGTVKDAIPGGNVKRGDVVKAVVVRTAKECRRPDGSYIKFDENAAVIIKPDNDPRGTRIFGPVGRELREKRFMKIISLAPEVL.

This sequence belongs to the universal ribosomal protein uL14 family. Part of the 50S ribosomal subunit. Forms a cluster with proteins L3 and L19. In the 70S ribosome, L14 and L19 interact and together make contacts with the 16S rRNA in bridges B5 and B8.

Its function is as follows. Binds to 23S rRNA. Forms part of two intersubunit bridges in the 70S ribosome. The sequence is that of Large ribosomal subunit protein uL14 from Mycobacterium leprae (strain TN).